Consider the following 216-residue polypeptide: Methylthioribulose-1-phosphate dehydratase (216 aa).

Positions 101 and 103 each coordinate Zn(2+).

Belongs to the aldolase class II family. MtnB subfamily. Zn(2+) serves as cofactor.

It carries out the reaction 5-(methylsulfanyl)-D-ribulose 1-phosphate = 5-methylsulfanyl-2,3-dioxopentyl phosphate + H2O. The protein operates within amino-acid biosynthesis; L-methionine biosynthesis via salvage pathway; L-methionine from S-methyl-5-thio-alpha-D-ribose 1-phosphate: step 2/6. In terms of biological role, catalyzes the dehydration of methylthioribulose-1-phosphate (MTRu-1-P) into 2,3-diketo-5-methylthiopentyl-1-phosphate (DK-MTP-1-P). This Bradyrhizobium sp. (strain BTAi1 / ATCC BAA-1182) protein is Methylthioribulose-1-phosphate dehydratase.